A 549-amino-acid chain; its full sequence is Chaperonin GroEL 2 (549 aa).

Residues 30 to 33 (TLGP), Lys51, 87 to 91 (DGTTT), Gly415, 479 to 481 (NAA), and Asp495 each bind ATP.

Belongs to the chaperonin (HSP60) family. Forms a cylinder of 14 subunits composed of two heptameric rings stacked back-to-back. Interacts with the co-chaperonin GroES.

The protein resides in the cytoplasm. It carries out the reaction ATP + H2O + a folded polypeptide = ADP + phosphate + an unfolded polypeptide.. In terms of biological role, together with its co-chaperonin GroES, plays an essential role in assisting protein folding. The GroEL-GroES system forms a nano-cage that allows encapsulation of the non-native substrate proteins and provides a physical environment optimized to promote and accelerate protein folding. In Polaromonas naphthalenivorans (strain CJ2), this protein is Chaperonin GroEL 2.